A 609-amino-acid polypeptide reads, in one-letter code: Snake venom metalloproteinase-disintegrin-like mocarhagin (609 aa).

The signal sequence occupies residues 1–20 (MIQALLVAICLAVFPYQGSS). Residues 21–191 (IILESGNVND…DEPIEKSSQL (171 aa)) constitute a propeptide that is removed on maturation. Positions 205-400 (KYIEFYVVVD…DRPQCILNKP (196 aa)) constitute a Peptidase M12B domain. Residues glutamate 208 and aspartate 292 each coordinate Ca(2+). N-linked (GlcNAc...) asparagine glycosylation is present at asparagine 303. 3 cysteine pairs are disulfide-bonded: cysteine 316–cysteine 395, cysteine 356–cysteine 379, and cysteine 358–cysteine 363. Residues histidine 341 and histidine 345 each coordinate Zn(2+). Ca(2+) contacts are provided by cysteine 395, asparagine 398, valine 410, asparagine 413, phenylalanine 415, glutamate 417, glutamate 420, and aspartate 423. The region spanning 408–494 (PPVCGNYFVE…KCPKDSFQRN (87 aa)) is the Disintegrin domain. 14 cysteine pairs are disulfide-bonded: cysteine 411–cysteine 440, cysteine 422–cysteine 435, cysteine 424–cysteine 430, cysteine 434–cysteine 457, cysteine 448–cysteine 454, cysteine 453–cysteine 479, cysteine 466–cysteine 486, cysteine 473–cysteine 505, cysteine 498–cysteine 510, cysteine 517–cysteine 567, cysteine 532–cysteine 575, cysteine 545–cysteine 555, cysteine 562–cysteine 601, and cysteine 595–cysteine 606. The D/ECD-tripeptide signature appears at 472 to 474 (DCD). N-linked (GlcNAc...) asparagine glycosylation is present at asparagine 507.

The protein belongs to the venom metalloproteinase (M12B) family. P-III subfamily. P-IIIa sub-subfamily. Monomer. Zn(2+) is required as a cofactor. In terms of tissue distribution, expressed by the venom gland.

It localises to the secreted. Its activity is regulated as follows. Inhibited by EDTA and diisopropyl fluorophosphate (DFP). Also inhibited by an excess of zinc or calcium ions. Its function is as follows. Snake venom zinc metalloproteinase that inhibits platelet aggregation by cleaving platelet glycoprotein Ib alpha (GP1BA) at Glu-298/Asp-299, and abolishes binding of von Willebrand factor (VWF) to GPIBA. Cleaves P-selectin glycoprotein ligand-1 (PSGL-1/SELPLG) at Tyr-51/Asp-52, and completely abolishes the binding of PSGL-1 to P-selectin. Anionic amino acid sequences containing sulfated tyrosines are needed for cleavages. Inhibits the thrombin-induced platelet aggregation, and the thrombin-induced release of ATP and ADP. Has lectin activity (inhibited by heparin). The protein is Snake venom metalloproteinase-disintegrin-like mocarhagin of Naja mossambica (Mozambique spitting cobra).